The chain runs to 481 residues: Proline--tRNA ligase (481 aa).

It belongs to the class-II aminoacyl-tRNA synthetase family. ProS type 3 subfamily. Homodimer.

Its subcellular location is the cytoplasm. It carries out the reaction tRNA(Pro) + L-proline + ATP = L-prolyl-tRNA(Pro) + AMP + diphosphate. Functionally, catalyzes the attachment of proline to tRNA(Pro) in a two-step reaction: proline is first activated by ATP to form Pro-AMP and then transferred to the acceptor end of tRNA(Pro). The sequence is that of Proline--tRNA ligase from Chlorobium limicola (strain DSM 245 / NBRC 103803 / 6330).